Reading from the N-terminus, the 360-residue chain is S-adenosylmethionine:tRNA ribosyltransferase-isomerase (360 aa).

Belongs to the QueA family. In terms of assembly, monomer.

It localises to the cytoplasm. The catalysed reaction is 7-aminomethyl-7-carbaguanosine(34) in tRNA + S-adenosyl-L-methionine = epoxyqueuosine(34) in tRNA + adenine + L-methionine + 2 H(+). It functions in the pathway tRNA modification; tRNA-queuosine biosynthesis. Its function is as follows. Transfers and isomerizes the ribose moiety from AdoMet to the 7-aminomethyl group of 7-deazaguanine (preQ1-tRNA) to give epoxyqueuosine (oQ-tRNA). In Rhizobium meliloti (strain 1021) (Ensifer meliloti), this protein is S-adenosylmethionine:tRNA ribosyltransferase-isomerase.